A 154-amino-acid chain; its full sequence is 6,7-dimethyl-8-ribityllumazine synthase (154 aa).

5-amino-6-(D-ribitylamino)uracil contacts are provided by residues Phe22, 56 to 58 (AFE), and 80 to 82 (AVI). Position 85-86 (85-86 (AT)) interacts with (2S)-2-hydroxy-3-oxobutyl phosphate. His88 serves as the catalytic Proton donor. Position 113 (Phe113) interacts with 5-amino-6-(D-ribitylamino)uracil. Arg127 contributes to the (2S)-2-hydroxy-3-oxobutyl phosphate binding site.

Belongs to the DMRL synthase family. In terms of assembly, forms an icosahedral capsid composed of 60 subunits, arranged as a dodecamer of pentamers.

The enzyme catalyses (2S)-2-hydroxy-3-oxobutyl phosphate + 5-amino-6-(D-ribitylamino)uracil = 6,7-dimethyl-8-(1-D-ribityl)lumazine + phosphate + 2 H2O + H(+). It participates in cofactor biosynthesis; riboflavin biosynthesis; riboflavin from 2-hydroxy-3-oxobutyl phosphate and 5-amino-6-(D-ribitylamino)uracil: step 1/2. In terms of biological role, catalyzes the formation of 6,7-dimethyl-8-ribityllumazine by condensation of 5-amino-6-(D-ribitylamino)uracil with 3,4-dihydroxy-2-butanone 4-phosphate. This is the penultimate step in the biosynthesis of riboflavin. This chain is 6,7-dimethyl-8-ribityllumazine synthase, found in Geobacillus thermodenitrificans (strain NG80-2).